A 93-amino-acid chain; its full sequence is Small ribosomal subunit protein uS17 (93 aa).

This sequence belongs to the universal ribosomal protein uS17 family. As to quaternary structure, part of the 30S ribosomal subunit.

Its function is as follows. One of the primary rRNA binding proteins, it binds specifically to the 5'-end of 16S ribosomal RNA. The protein is Small ribosomal subunit protein uS17 of Corynebacterium aurimucosum (strain ATCC 700975 / DSM 44827 / CIP 107346 / CN-1) (Corynebacterium nigricans).